The sequence spans 312 residues: uncharacterized protein (312 aa).

The N-terminal stretch at 1–28 (MNSADTQEPKSFNHTDMWTAFGTTMSGA) is a signal peptide.

Functionally, the FAS-operon encodes genes involved in cytokinin production and in host plant fasciation (leafy gall). This is an uncharacterized protein from Rhodococcoides fascians (Rhodococcus fascians).